The following is a 301-amino-acid chain: Small ribosomal subunit protein uS2 (301 aa).

Belongs to the universal ribosomal protein uS2 family.

In Acidobacterium capsulatum (strain ATCC 51196 / DSM 11244 / BCRC 80197 / JCM 7670 / NBRC 15755 / NCIMB 13165 / 161), this protein is Small ribosomal subunit protein uS2.